The primary structure comprises 200 residues: ATP-dependent Clp protease proteolytic subunit 2 (200 aa).

S99 serves as the catalytic Nucleophile. Residue H123 is part of the active site.

Belongs to the peptidase S14 family. In terms of assembly, fourteen ClpP subunits assemble into 2 heptameric rings which stack back to back to give a disk-like structure with a central cavity, resembling the structure of eukaryotic proteasomes.

The protein resides in the cytoplasm. The catalysed reaction is Hydrolysis of proteins to small peptides in the presence of ATP and magnesium. alpha-casein is the usual test substrate. In the absence of ATP, only oligopeptides shorter than five residues are hydrolyzed (such as succinyl-Leu-Tyr-|-NHMec, and Leu-Tyr-Leu-|-Tyr-Trp, in which cleavage of the -Tyr-|-Leu- and -Tyr-|-Trp bonds also occurs).. Its function is as follows. Cleaves peptides in various proteins in a process that requires ATP hydrolysis. Has a chymotrypsin-like activity. Plays a major role in the degradation of misfolded proteins. The chain is ATP-dependent Clp protease proteolytic subunit 2 from Symbiobacterium thermophilum (strain DSM 24528 / JCM 14929 / IAM 14863 / T).